The primary structure comprises 365 residues: Myb/SANT-like DNA-binding domain-containing protein 3 (365 aa).

Positions 13–78 (FSELEKSVLL…QLKKCWENIK (66 aa)) constitute a Myb-like domain. The stretch at 301–337 (QLIQMNEVHVAKVQQIERECEMAEEEHRIKMEILNKK) forms a coiled coil.

Belongs to the MSANTD3 family.

This chain is Myb/SANT-like DNA-binding domain-containing protein 3 (msantd3), found in Xenopus tropicalis (Western clawed frog).